The sequence spans 124 residues: Aspartate 1-decarboxylase (124 aa).

Catalysis depends on S25, which acts as the Schiff-base intermediate with substrate; via pyruvic acid. Pyruvic acid (Ser) is present on S25. T57 contributes to the substrate binding site. Catalysis depends on Y58, which acts as the Proton donor. 73-75 (GAA) provides a ligand contact to substrate.

Belongs to the PanD family. As to quaternary structure, heterooctamer of four alpha and four beta subunits. Pyruvate is required as a cofactor. Is synthesized initially as an inactive proenzyme, which is activated by self-cleavage at a specific serine bond to produce a beta-subunit with a hydroxyl group at its C-terminus and an alpha-subunit with a pyruvoyl group at its N-terminus.

Its subcellular location is the cytoplasm. It catalyses the reaction L-aspartate + H(+) = beta-alanine + CO2. It functions in the pathway cofactor biosynthesis; (R)-pantothenate biosynthesis; beta-alanine from L-aspartate: step 1/1. Functionally, catalyzes the pyruvoyl-dependent decarboxylation of aspartate to produce beta-alanine. This chain is Aspartate 1-decarboxylase, found in Clostridium beijerinckii (strain ATCC 51743 / NCIMB 8052) (Clostridium acetobutylicum).